We begin with the raw amino-acid sequence, 258 residues long: Ribosomal RNA large subunit methyltransferase E (258 aa).

S-adenosyl-L-methionine contacts are provided by G58, W60, D78, D96, and D120. K160 (proton acceptor) is an active-site residue.

Belongs to the class I-like SAM-binding methyltransferase superfamily. RNA methyltransferase RlmE family.

It is found in the cytoplasm. It carries out the reaction uridine(2552) in 23S rRNA + S-adenosyl-L-methionine = 2'-O-methyluridine(2552) in 23S rRNA + S-adenosyl-L-homocysteine + H(+). Functionally, specifically methylates the uridine in position 2552 of 23S rRNA at the 2'-O position of the ribose in the fully assembled 50S ribosomal subunit. This Methanococcus maripaludis (strain C5 / ATCC BAA-1333) protein is Ribosomal RNA large subunit methyltransferase E.